A 1024-amino-acid polypeptide reads, in one-letter code: Carbamoyl phosphate synthase large chain (1024 aa).

The segment at 1–396 (MDIKKILVIG…AWQKAVRMID (396 aa)) is carboxyphosphate synthetic domain. Residues arginine 125, arginine 165, glycine 171, glycine 172, lysine 204, leucine 206, glutamate 211, glycine 237, valine 238, histidine 239, glutamine 280, and glutamate 294 each coordinate ATP. In terms of domain architecture, ATP-grasp 1 spans 129–323 (QKAMREAGIP…LAYIAAKLAL (195 aa)). Positions 280, 294, and 296 each coordinate Mg(2+). The Mn(2+) site is built by glutamine 280, glutamate 294, and asparagine 296. Positions 397–536 (IGEPGLVGGP…LTYGGQYDDK (140 aa)) are oligomerization domain. Residues 536–917 (KTPGVDYLVV…LKSWLSATPN (382 aa)) are carbamoyl phosphate synthetic domain. The ATP-grasp 2 domain occupies 660–849 (SKLLDRLGIK…YMSLVADVLT (190 aa)). ATP-binding residues include arginine 696, lysine 735, glutamate 742, glycine 766, valine 767, histidine 768, serine 769, glutamine 809, and glutamate 820. Residues glutamine 809, glutamate 820, and asparagine 822 each coordinate Mg(2+). Residues glutamine 809, glutamate 820, and asparagine 822 each contribute to the Mn(2+) site. One can recognise an MGS-like domain in the interval 917–1024 (NKIPSKTALI…KNGKLEVAPW (108 aa)). The segment at 918 to 1024 (KIPSKTALIY…KNGKLEVAPW (107 aa)) is allosteric domain.

It belongs to the CarB family. In terms of assembly, composed of two chains; the small (or glutamine) chain promotes the hydrolysis of glutamine to ammonia, which is used by the large (or ammonia) chain to synthesize carbamoyl phosphate. Tetramer of heterodimers (alpha,beta)4. Mg(2+) is required as a cofactor. The cofactor is Mn(2+).

It catalyses the reaction hydrogencarbonate + L-glutamine + 2 ATP + H2O = carbamoyl phosphate + L-glutamate + 2 ADP + phosphate + 2 H(+). It carries out the reaction hydrogencarbonate + NH4(+) + 2 ATP = carbamoyl phosphate + 2 ADP + phosphate + 2 H(+). The protein operates within amino-acid biosynthesis; L-arginine biosynthesis; carbamoyl phosphate from bicarbonate: step 1/1. Its pathway is pyrimidine metabolism; UMP biosynthesis via de novo pathway; (S)-dihydroorotate from bicarbonate: step 1/3. Functionally, large subunit of the glutamine-dependent carbamoyl phosphate synthetase (CPSase). CPSase catalyzes the formation of carbamoyl phosphate from the ammonia moiety of glutamine, carbonate, and phosphate donated by ATP, constituting the first step of 2 biosynthetic pathways, one leading to arginine and/or urea and the other to pyrimidine nucleotides. The large subunit (synthetase) binds the substrates ammonia (free or transferred from glutamine from the small subunit), hydrogencarbonate and ATP and carries out an ATP-coupled ligase reaction, activating hydrogencarbonate by forming carboxy phosphate which reacts with ammonia to form carbamoyl phosphate. The chain is Carbamoyl phosphate synthase large chain from Pyrobaculum aerophilum (strain ATCC 51768 / DSM 7523 / JCM 9630 / CIP 104966 / NBRC 100827 / IM2).